Reading from the N-terminus, the 644-residue chain is Sentrin-specific protease 1 (644 aa).

Residues 1–200 (MDDIADRMRM…REIYRQLLQM (200 aa)) form an interaction with CCAR2 region. Phosphoserine is present on residues Ser-57, Ser-117, Ser-132, and Ser-157. The interval 92–117 (QSANGQWRNSTPSSSSSLQKSRNSRS) is disordered. A compositionally biased stretch (low complexity) spans 99–117 (RNSTPSSSSSLQKSRNSRS). Disordered regions lie at residues 156 to 184 (PSPS…TAEE) and 283 to 312 (SKDS…NTQS). Residues 171-177 (PKKTQRR) carry the Nuclear localization signal motif. A protease region spans residues 450-613 (LTITRKDIQT…GMFACKYADC (164 aa)). Active-site residues include His-533 and Asp-550. The short motif at 574–577 (KKRK) is the Nuclear localization signal element. The active-site Nucleophile is Cys-603. Residues 628-634 (PYFRKRM) carry the Nuclear localization signal motif. Residues 635–644 (VWEILHRKLL) carry the Nuclear export signal motif.

This sequence belongs to the peptidase C48 family. In terms of assembly, interacts with RBM33; promoting ALKBH5 desumoylation and subsequent activation. Highly expressed in testis. Expressed at lower levels in thymus, pancreas, spleen, liver, ovary and small intestine.

It is found in the nucleus. The protein resides in the cytoplasm. Its function is as follows. Protease that catalyzes two essential functions in the SUMO pathway. The first is the hydrolysis of an alpha-linked peptide bond at the C-terminal end of the small ubiquitin-like modifier (SUMO) propeptides, SUMO1, SUMO2 and SUMO3 leading to the mature form of the proteins. The second is the deconjugation of SUMO1, SUMO2 and SUMO3 from targeted proteins, by cleaving an epsilon-linked peptide bond between the C-terminal glycine of the mature SUMO and the lysine epsilon-amino group of the target protein. Deconjugates SUMO1 from HIPK2. Deconjugates SUMO1 from HDAC1 and BHLHE40/DEC1, which decreases its transcriptional repression activity. Deconjugates SUMO1 from CLOCK, which decreases its transcriptional activation activity. Deconjugates SUMO2 from MTA1. Inhibits N(6)-methyladenosine (m6A) RNA methylation by mediating SUMO1 deconjugation from METTL3 and ALKBH5: METTL3 inhibits the m6A RNA methyltransferase activity, while ALKBH5 desumoylation promotes m6A demethylation. Desumoylates CCAR2 which decreases its interaction with SIRT1. Deconjugates SUMO1 from GPS2. The sequence is that of Sentrin-specific protease 1 (SENP1) from Homo sapiens (Human).